A 105-amino-acid polypeptide reads, in one-letter code: U7-hexatoxin-Hi1a (105 aa).

The first 23 residues, 1-23 (MKTILLFLGVCAVGASMMTGGWT), serve as a signal peptide directing secretion.

Belongs to the cystatin family. In terms of processing, contains 2 disulfide bonds. As to expression, expressed by the venom gland.

It is found in the secreted. In terms of biological role, inhibits various C1 cysteine proteases. This protein has no toxic activity and its function in the venom is unknown. It may play a role as a housekeeping or regulatory protein. The polypeptide is U7-hexatoxin-Hi1a (Hadronyche infensa (Fraser island funnel-web spider)).